The chain runs to 279 residues: Shikimate dehydrogenase (NADP(+)) (279 aa).

Shikimate-binding positions include 21 to 23 (SKS) and threonine 68. Lysine 72 serves as the catalytic Proton acceptor. Glutamate 84 serves as a coordination point for NADP(+). Residues asparagine 93 and aspartate 109 each contribute to the shikimate site. NADP(+) contacts are provided by residues 133 to 137 (GAGGA), 157 to 162 (NRTQAK), and methionine 220. A shikimate-binding site is contributed by tyrosine 222. Glycine 244 is an NADP(+) binding site.

It belongs to the shikimate dehydrogenase family. In terms of assembly, homodimer.

It carries out the reaction shikimate + NADP(+) = 3-dehydroshikimate + NADPH + H(+). It participates in metabolic intermediate biosynthesis; chorismate biosynthesis; chorismate from D-erythrose 4-phosphate and phosphoenolpyruvate: step 4/7. Functionally, involved in the biosynthesis of the chorismate, which leads to the biosynthesis of aromatic amino acids. Catalyzes the reversible NADPH linked reduction of 3-dehydroshikimate (DHSA) to yield shikimate (SA). The polypeptide is Shikimate dehydrogenase (NADP(+)) (Shewanella halifaxensis (strain HAW-EB4)).